A 297-amino-acid chain; its full sequence is N-acetylmuramic acid 6-phosphate etherase (297 aa).

Residues 55–218 enclose the SIS domain; the sequence is AVAALKSGGR…STGAMVKFGK (164 aa). The active-site Proton donor is the glutamate 83. The active site involves glutamate 114.

It belongs to the GCKR-like family. MurNAc-6-P etherase subfamily. Homodimer.

The enzyme catalyses N-acetyl-D-muramate 6-phosphate + H2O = N-acetyl-D-glucosamine 6-phosphate + (R)-lactate. It functions in the pathway amino-sugar metabolism; 1,6-anhydro-N-acetylmuramate degradation. The protein operates within amino-sugar metabolism; N-acetylmuramate degradation. Its pathway is cell wall biogenesis; peptidoglycan recycling. In terms of biological role, specifically catalyzes the cleavage of the D-lactyl ether substituent of MurNAc 6-phosphate, producing GlcNAc 6-phosphate and D-lactate. Together with AnmK, is also required for the utilization of anhydro-N-acetylmuramic acid (anhMurNAc) either imported from the medium or derived from its own cell wall murein, and thus plays a role in cell wall recycling. This is N-acetylmuramic acid 6-phosphate etherase from Salmonella dublin (strain CT_02021853).